We begin with the raw amino-acid sequence, 612 residues long: Zinc metalloproteinase-disintegrin-like 2a (612 aa).

An N-terminal signal peptide occupies residues 1–20 (MIQVLLVTICLAVFPYQGSS). A propeptide spanning residues 21-189 (IILGSGNVND…KKASQLNLTP (169 aa)) is cleaved from the precursor. Positions 199–395 (KYIELVIVAD…NRPPCILNKP (197 aa)) constitute a Peptidase M12B domain. E202 is a Ca(2+) binding site. N-linked (GlcNAc...) asparagine glycosylation is present at N218. Residue D286 coordinates Ca(2+). Disulfide bonds link C310–C390, C350–C374, and C352–C357. Zn(2+) is bound at residue H335. The active site involves E336. Positions 339 and 345 each coordinate Zn(2+). Residues C390, N393, V405, N408, F410, E412, E415, and D418 each coordinate Ca(2+). The 87-residue stretch at 403-489 (PPVCGNYFVE…DCPTDNFQRN (87 aa)) folds into the Disintegrin domain. Disulfide bonds link C406–C435, C417–C430, C419–C425, C429–C452, C443–C449, C448–C474, C461–C481, C468–C500, C493–C505, C512–C562, C527–C573, C540–C550, C557–C599, and C593–C605. Positions 467–469 (ECD) match the D/ECD-tripeptide motif.

Belongs to the venom metalloproteinase (M12B) family. P-III subfamily. Requires Zn(2+) as cofactor. Expressed by the venom gland.

Its subcellular location is the secreted. Snake venom metalloproteinase that impairs hemostasis in the envenomed animal. This is Zinc metalloproteinase-disintegrin-like 2a from Crotalus adamanteus (Eastern diamondback rattlesnake).